Here is a 615-residue protein sequence, read N- to C-terminus: Aldehyde oxidase GLOX1 (615 aa).

The first 25 residues, 1-25 (MKKSTRLLWLLSIIVLVAAVSKAVA), serve as a signal peptide directing secretion. Asn-35 is a glycosylation site (N-linked (GlcNAc...) asparagine). Residues 70-89 (PPKAGKGKGKGKGRGTVAAG) are disordered. Residues 72–82 (KAGKGKGKGKG) are compositionally biased toward basic residues. Residues Asn-187 and Asn-297 are each glycosylated (N-linked (GlcNAc...) asparagine).

The protein localises to the secreted. It carries out the reaction an aldehyde + O2 + H2O = a carboxylate + H2O2 + H(+). Catalyzes the oxidation of aldehydes to the corresponding carboxylate by coupling the reaction to the reduction of dioxygen to hydrogen peroxide. Substrates include glyoxal and other aldehydes. May be regulated by the transcription factor MYB80 during anther development and play a role in tapetum and pollen development. The protein is Aldehyde oxidase GLOX1 of Arabidopsis thaliana (Mouse-ear cress).